The sequence spans 193 residues: MIRVGVLDLQGSVVEHMKILEKIDNVEPVRVKYKEDLDNIQGIILPGGESTTLGKLLKDFHIHDTLKEKIENGLPVWGTCAGMILLAKDIQGQEESYFKVIDIEVKRNAYGSQLNSFSIEEMLEDIDKEPIELVFIRAPYITTVGPNVTILKRVRKNIVAAKEKNVLVTSFHPELTEDTRFHRYFIDKFIKNK.

Gly48–Ser50 contacts L-glutamine. Cys80 functions as the Nucleophile in the catalytic mechanism. Residues Arg107 and Ile136–Arg137 each bind L-glutamine. Active-site charge relay system residues include His172 and Glu174.

Belongs to the glutaminase PdxT/SNO family. In terms of assembly, in the presence of PdxS, forms a dodecamer of heterodimers. Only shows activity in the heterodimer.

The catalysed reaction is aldehydo-D-ribose 5-phosphate + D-glyceraldehyde 3-phosphate + L-glutamine = pyridoxal 5'-phosphate + L-glutamate + phosphate + 3 H2O + H(+). It catalyses the reaction L-glutamine + H2O = L-glutamate + NH4(+). Its pathway is cofactor biosynthesis; pyridoxal 5'-phosphate biosynthesis. In terms of biological role, catalyzes the hydrolysis of glutamine to glutamate and ammonia as part of the biosynthesis of pyridoxal 5'-phosphate. The resulting ammonia molecule is channeled to the active site of PdxS. The protein is Pyridoxal 5'-phosphate synthase subunit PdxT of Clostridium botulinum (strain Loch Maree / Type A3).